The chain runs to 845 residues: Dynein axonemal assembly factor 5 (845 aa).

8 HEAT repeats span residues 47–84, 138–175, 180–217, 260–297, 332–369, 523–561, 674–715, and 766–803; these read DVFDKLYLHLLKCYEDRFESVRSKAIQVVSAFLSSLPP, ECYPLVVKILIKSIKDDYPVVQREGCSAVVTLSRLADT, PFTESILLPLYTMLNHKHAQARISAIQAIARLSLHMDA, SFFERILPLVLCCLKDESPEVLNHIYPQWLKCGIQYFN, QRSLRLLQLITRETSDWKDNVRLHALKLLYQFVLHAEA, NFGQTLIEKMVKLLNTSVPKIHERWFHLALQDVINLDAA, SESV…MSVE, and AIVKRAMDLLLLYHESPEKDMRAAVAVTLKVLAKSHPE.

Belongs to the DNAAF5 family. As to expression, expressed in testis.

It is found in the cytoplasm. Its subcellular location is the dynein axonemal particle. Its function is as follows. Cytoplasmic protein involved in the delivery of the dynein machinery to the motile cilium. It is required for the assembly of the axonemal dynein inner and outer arms, two structures attached to the peripheral outer doublet A microtubule of the axoneme, that play a crucial role in cilium motility. In Drosophila melanogaster (Fruit fly), this protein is Dynein axonemal assembly factor 5.